A 419-amino-acid chain; its full sequence is Gamma-glutamyl phosphate reductase (419 aa).

It belongs to the gamma-glutamyl phosphate reductase family.

It localises to the cytoplasm. It catalyses the reaction L-glutamate 5-semialdehyde + phosphate + NADP(+) = L-glutamyl 5-phosphate + NADPH + H(+). It participates in amino-acid biosynthesis; L-proline biosynthesis; L-glutamate 5-semialdehyde from L-glutamate: step 2/2. In terms of biological role, catalyzes the NADPH-dependent reduction of L-glutamate 5-phosphate into L-glutamate 5-semialdehyde and phosphate. The product spontaneously undergoes cyclization to form 1-pyrroline-5-carboxylate. The chain is Gamma-glutamyl phosphate reductase from Azobacteroides pseudotrichonymphae genomovar. CFP2.